A 402-amino-acid polypeptide reads, in one-letter code: 1-deoxy-D-xylulose 5-phosphate reductoisomerase (402 aa).

NADPH-binding residues include T21, G22, S23, I24, G47, N50, and N127. K128 is a 1-deoxy-D-xylulose 5-phosphate binding site. E129 serves as a coordination point for NADPH. Position 151 (D151) interacts with Mn(2+). 1-deoxy-D-xylulose 5-phosphate contacts are provided by S152, E153, S177, and H200. E153 is a Mn(2+) binding site. G206 lines the NADPH pocket. 4 residues coordinate 1-deoxy-D-xylulose 5-phosphate: S213, N218, K219, and E222. E222 is a binding site for Mn(2+).

The protein belongs to the DXR family. Mg(2+) is required as a cofactor. The cofactor is Mn(2+).

The catalysed reaction is 2-C-methyl-D-erythritol 4-phosphate + NADP(+) = 1-deoxy-D-xylulose 5-phosphate + NADPH + H(+). It functions in the pathway isoprenoid biosynthesis; isopentenyl diphosphate biosynthesis via DXP pathway; isopentenyl diphosphate from 1-deoxy-D-xylulose 5-phosphate: step 1/6. Catalyzes the NADPH-dependent rearrangement and reduction of 1-deoxy-D-xylulose-5-phosphate (DXP) to 2-C-methyl-D-erythritol 4-phosphate (MEP). The polypeptide is 1-deoxy-D-xylulose 5-phosphate reductoisomerase (Mycobacterium marinum (strain ATCC BAA-535 / M)).